A 104-amino-acid chain; its full sequence is Large ribosomal subunit protein uL23 (104 aa).

The protein belongs to the universal ribosomal protein uL23 family. In terms of assembly, part of the 50S ribosomal subunit. Contacts protein L29, and trigger factor when it is bound to the ribosome.

In terms of biological role, one of the early assembly proteins it binds 23S rRNA. One of the proteins that surrounds the polypeptide exit tunnel on the outside of the ribosome. Forms the main docking site for trigger factor binding to the ribosome. In Trichormus variabilis (strain ATCC 29413 / PCC 7937) (Anabaena variabilis), this protein is Large ribosomal subunit protein uL23.